Here is a 325-residue protein sequence, read N- to C-terminus: Olfactory receptor 14L1 (325 aa).

The Extracellular portion of the chain corresponds to 1 to 43 (MAQFNKNQLIACRRNGTTTSDFNQTEVAEFFLMGFSNSWDIQI). Residues 44 to 64 (VHAALFFLVYLAAVIGNLLII) traverse the membrane as a helical segment. Residues 65-72 (ILTTLDVH) lie on the Cytoplasmic side of the membrane. Residues 73-93 (LQTPMYFFLRNLSFLDFCYIS) form a helical membrane-spanning segment. Residues 94 to 117 (VTIPKSIVSSLTHDTSISFFGCAL) are Extracellular-facing. Residues 118–138 (QAFFFMDLATTEVAILTVMSY) form a helical membrane-spanning segment. The Cytoplasmic segment spans residues 139-151 (DRYMAICRPLHYE). The helical transmembrane segment at 152–172 (VIINQGVCLRMMAMSWLSGVI) threads the bilayer. At 173-214 (CGFMHVIATFSLPFCGRNRIRQFFCNIPQLLSLLDPKVITIE) the chain is on the extracellular side. Residues 215-235 (IGVMVFGTSLVIISFVVITLS) traverse the membrane as a helical segment. Residues 236-255 (YMYIFSVIMRIPSKEGRSKT) lie on the Cytoplasmic side of the membrane. Residues 256–276 (FSTCIPHLVVVTLFMISGSIA) traverse the membrane as a helical segment. The Extracellular portion of the chain corresponds to 277 to 289 (YVKPISNSPPVLD). A helical membrane pass occupies residues 290 to 310 (VFLSAFYTVVPPTLNPVIYSL). Residues 311 to 325 (RNRDMKAALRRQCGP) are Cytoplasmic-facing.

It belongs to the G-protein coupled receptor 1 family.

It localises to the cell membrane. Functionally, odorant receptor. The sequence is that of Olfactory receptor 14L1 from Homo sapiens (Human).